Here is a 330-residue protein sequence, read N- to C-terminus: Urokinase plasminogen activator surface receptor (330 aa).

A signal peptide spans 1–20 (MGQPLLLLLLVYTYIPGSWG). 3 UPAR/Ly6 domains span residues 21–112 (LRCL…RNRY), 113–208 (LECA…PPNG), and 209–300 (LQCY…PGKG). Intrachain disulfides connect cysteine 23-cysteine 44, cysteine 26-cysteine 32, and cysteine 37-cysteine 65. Asparagine 28 carries N-linked (GlcNAc...) asparagine glycosylation. Asparagine 72 carries N-linked (GlcNAc...) asparagine glycosylation. 11 disulfides stabilise this stretch: cysteine 91–cysteine 96, cysteine 115–cysteine 142, cysteine 118–cysteine 125, cysteine 135–cysteine 164, cysteine 170–cysteine 187, cysteine 188–cysteine 193, cysteine 211–cysteine 239, cysteine 214–cysteine 222, cysteine 232–cysteine 258, cysteine 264–cysteine 282, and cysteine 283–cysteine 288. N-linked (GlcNAc...) asparagine glycosylation is found at asparagine 179 and asparagine 189. Asparagine 279 carries an N-linked (GlcNAc...) asparagine glycan. Glycine 300 is lipidated: GPI-anchor amidated glycine. Residues 301–330 (GAPKTSPAHLSFFVSLLLTARLWGATLLCT) constitute a propeptide, removed in mature form.

As to quaternary structure, monomer. Interacts (via the UPAR/Ly6 domains) with SRPX2. Interacts with MRC2. Interacts with SORL1 (via N-terminal ectodomain); this interaction decreases PLAUR internalization. The ternary complex composed of PLAUR-PLAU-SERPINE1 also interacts with SORL1. Interacts with CD82; this interaction prevents PLAUR from binding to its high affinity ligand PLAU.

Its subcellular location is the cell membrane. Functionally, acts as a receptor for urokinase plasminogen activator. Plays a role in localizing and promoting plasmin formation. Mediates the proteolysis-independent signal transduction activation effects of U-PA. This is Urokinase plasminogen activator surface receptor (PLAUR) from Bos taurus (Bovine).